The chain runs to 677 residues: MTTSHMNGYVTESDGGGGTDIVEEGVQRHREMAVDCPSELGARTLPVRRSAQLEKIRQQQEDRRRREEEGRSRQELDLNSSMRLKKLSQNPKVGIDNPTFEQMEGPGGSAGGLQSLIAPPALLELEDLLMSLKQVQHSLNDSQSQEDVELVLQLVQKPDFQKAFSIHNSVAHYMNRPSPPYPLTDHAQTLAQEVEVMVQNSSHKEGLELSSLLSTSHMQALMMAHDSVAEQEMQLEPLVPSVNASETLTQWGGETVKIVRIEKAKDIPLGATVRNDMDSVVISRIVKGGAAERSGLLHEGDEILEINGVEIRGKDVNEVFDILADMHGVLSFVLIPSAQIKSPPIKETVVHVKAHFDYDPSDDPYVPCRELGLCFQKGDILHIISQDDPNWWQAYRDGDEDNQPLAGLVPGKSFQQQREAMKQTIEEDKEPEKTGKLWCAKKTKKKRKKMQYNANKNDDFDNEEILTYEEMALYHQPANRKRPIALIGPPNCGQNELRQRLLSTEPDRFAGPVPHTTRSRRDAEANGRDYHFVSRQAFEMDSAAGKFIESGEFEKNFYGTSTDSVRQVINTGKICLLCVHTQSLKVLRSSDLKPYIIFIAPPSQERLRALLAKDNKNPKPEELRDIIEKAREMEQNYGHLFDAAIVNTDLDKSYQELLRLINKLDTEPQWVPSSWLR.

The interval 1–347 is required for the correct localization of PALS1 and PATJ at cell-cell contacts and the normal formation of tight junctions and adherens junctions; sequence MTTSHMNGYV…AQIKSPPIKE (347 aa). The disordered stretch occupies residues 39-81; sequence ELGARTLPVRRSAQLEKIRQQQEDRRRREEEGRSRQELDLNSS. Basic and acidic residues predominate over residues 51-76; that stretch reads AQLEKIRQQQEDRRRREEEGRSRQEL. L27 domains follow at residues 121-178 and 180-236; these read ALLE…NRPS and PYPL…MQLE. The PDZ domain maps to 258-338; it reads IVRIEKAKDI…VLSFVLIPSA (81 aa). The SH3 domain maps to 347–419; the sequence is ETVVHVKAHF…PGKSFQQQRE (73 aa). The Guanylate kinase-like domain maps to 481 to 662; it reads KRPIALIGPP…SYQELLRLIN (182 aa). 488–495 lines the ATP pocket; sequence GPPNCGQN. The segment at 506–526 is disordered; it reads PDRFAGPVPHTTRSRRDAEAN.

It belongs to the MAGUK family. In terms of tissue distribution, expressed in the retina and in the neural tube.

It is found in the apical cell membrane. It localises to the cell junction. Its subcellular location is the tight junction. Its function is as follows. Plays a role in tight junction biogenesis and in the establishment of cell polarity in epithelial cells. Also involved in adherens junction biogenesis. Required for polarized epithelial organization, cell-cell adhesion and remodeling of myocardial cells during heart tube elongation during embryogenesis. Functions in cellular patterning of the retina and development of the retinal pigmented epithelium. Also required for embryo body axis specification. This is Protein PALS1 (pals1a) from Danio rerio (Zebrafish).